A 477-amino-acid polypeptide reads, in one-letter code: Angiotensinogen (477 aa).

Positions 1-24 are cleaved as a signal peptide; the sequence is MTPTGAGLKATIFCILTWVSLTAG. An intrachain disulfide couples Cys-42 to Cys-161. N-linked (GlcNAc...) asparagine glycosylation is found at Asn-295 and Asn-319.

This sequence belongs to the serpin family. Post-translationally, in response to low blood pressure, the enzyme renin/REN cleaves angiotensinogen to produce angiotensin-1. Angiotensin-1 is a substrate of ACE (angiotensin converting enzyme) that removes a dipeptide to yield the physiologically active peptide angiotensin-2. Angiotensin-1 and angiotensin-2 can be further processed to generate angiotensin-3, angiotensin-4. Angiotensin 1-9 is cleaved from angiotensin-1 by ACE2 and can be further processed by ACE to produce angiotensin 1-7, angiotensin 1-5 and angiotensin 1-4. Angiotensin 1-7 has also been proposed to be cleaved from angiotensin-2 by ACE2 or from angiotensin-1 by MME (neprilysin). In terms of processing, the disulfide bond is labile. Angiotensinogen is present in the circulation in a near 40:60 ratio with the oxidized disulfide-bonded form, which preferentially interacts with receptor-bound renin.

The protein resides in the secreted. In terms of biological role, essential component of the renin-angiotensin system (RAS), a potent regulator of blood pressure, body fluid and electrolyte homeostasis. Its function is as follows. Acts directly on vascular smooth muscle as a potent vasoconstrictor, affects cardiac contractility and heart rate through its action on the sympathetic nervous system, and alters renal sodium and water absorption through its ability to stimulate the zona glomerulosa cells of the adrenal cortex to synthesize and secrete aldosterone. Acts by binding to angiotensin receptors AGTR1 and AGTR2. Also binds the DEAR/FBXW7-AS1 receptor. Stimulates aldosterone release. Functionally, is a ligand for the G-protein coupled receptor MAS1. Has vasodilator and antidiuretic effects. Has an antithrombotic effect that involves MAS1-mediated release of nitric oxide from platelets. The sequence is that of Angiotensinogen (Agt) from Rattus norvegicus (Rat).